A 393-amino-acid polypeptide reads, in one-letter code: NAD(P)H-quinone oxidoreductase subunit H, chloroplastic (393 aa).

This sequence belongs to the complex I 49 kDa subunit family. In terms of assembly, NDH is composed of at least 16 different subunits, 5 of which are encoded in the nucleus.

It localises to the plastid. Its subcellular location is the chloroplast thylakoid membrane. It catalyses the reaction a plastoquinone + NADH + (n+1) H(+)(in) = a plastoquinol + NAD(+) + n H(+)(out). The enzyme catalyses a plastoquinone + NADPH + (n+1) H(+)(in) = a plastoquinol + NADP(+) + n H(+)(out). NDH shuttles electrons from NAD(P)H:plastoquinone, via FMN and iron-sulfur (Fe-S) centers, to quinones in the photosynthetic chain and possibly in a chloroplast respiratory chain. The immediate electron acceptor for the enzyme in this species is believed to be plastoquinone. Couples the redox reaction to proton translocation, and thus conserves the redox energy in a proton gradient. The chain is NAD(P)H-quinone oxidoreductase subunit H, chloroplastic from Chlorokybus atmophyticus (Soil alga).